We begin with the raw amino-acid sequence, 279 residues long: Nitrate import permease protein NrtB (279 aa).

An ABC transmembrane type-1 domain is found at Ile-86–Ala-270. Helical transmembrane passes span Leu-98–Phe-118, Ile-124–Phe-144, Ala-151–Val-171, Val-196–Ser-216, Trp-217–Trp-237, and Ile-249–Ile-269.

Belongs to the binding-protein-dependent transport system permease family. CysTW subfamily. The complex is composed of two ATP-binding proteins (NrtC and NrtD), two transmembrane proteins (NrtB) and a solute-binding protein (NrtA).

It is found in the cell inner membrane. Functionally, part of the ABC transporter complex NrtABCD involved in nitrate uptake. The complex is probably also involved in nitrite transport. Probably responsible for the translocation of the substrate across the membrane. The sequence is that of Nitrate import permease protein NrtB from Leptolyngbya laminosa (Phormidium laminosum).